A 619-amino-acid polypeptide reads, in one-letter code: Transcription factor 7-like 2 (619 aa).

Residues 1–11 (MPQLNGGGGDD) are compositionally biased toward gly residues. The tract at residues 1–53 (MPQLNGGGGDDLGANDELISFKDEGEQEEKSSENSSAERDLADVKSSLVNESE) is CTNNB1-binding. The segment at 1–96 (MPQLNGGGGD…AKRQDGGLFK (96 aa)) is disordered. Over residues 19–43 (ISFKDEGEQEEKSSENSSAERDLAD) the composition is skewed to basic and acidic residues. Lys22 is covalently cross-linked (Glycyl lysine isopeptide (Lys-Gly) (interchain with G-Cter in SUMO2)). Polar residues predominate over residues 47-57 (SLVNESETNQN). A compositionally biased stretch (basic and acidic residues) spans 63–91 (EAERRPPPRSESFRDKSRESLEEAAKRQD). Residues Thr201 and Thr212 each carry the phosphothreonine; by NLK modification. The interval 201-395 (TPLITYSNEH…RRWHALSREE (195 aa)) is mediates interaction with MAD2L2. Residues 318 to 328 (TVKQESSQSDV) are compositionally biased toward polar residues. Disordered regions lie at residues 318-350 (TVKQ…KPHI), 420-441 (RDNY…TNEH), 496-547 (CLSP…AHLS), and 574-619 (DLPP…KSLE). Residue Lys320 forms a Glycyl lysine isopeptide (Lys-Gly) (interchain with G-Cter in SUMO) linkage. Residues 335-346 (KHQDSKKEEEKK) show a composition bias toward basic and acidic residues. A DNA-binding region (HMG box) is located at residues 350–418 (IKKPLNAFML…LHMQLYPGWS (69 aa)). The Nuclear localization signal signature appears at 425 to 430 (KKKKRK). The interval 459 to 505 (SAPKKCRARFGLDQQNNWCGPCRRKKKCVRYIQGEGSCLSPPSSDGS) is promoter-specific activation domain. The span at 496-508 (CLSPPSSDGSLLD) shows a compositional bias: low complexity. Lys539 participates in a covalent cross-link: Glycyl lysine isopeptide (Lys-Gly) (interchain with G-Cter in SUMO2). Residues 574-603 (DLPPAALQPAAPSSSIAQPSTSSLHSHSSL) show a composition bias toward low complexity. The span at 604-619 (AGTQPQPLSLVTKSLE) shows a compositional bias: polar residues.

This sequence belongs to the TCF/LEF family. As to quaternary structure, interacts with TGFB1I1. Interacts with CTNNB1 (via the armadillo repeat); forms stable transcription complex. Interacts with EP300. Interacts with NLK. Interacts with CCDC85B (probably through the HMG box); prevents interaction with CTNNB1. Interacts with TNIK. Interacts with MAD2L2; prevents TCF7L2/TCF4 binding to promZIPK/DAPK3oters, negatively modulating its transcriptional activity. Interacts with ZIPK/DAPK3. Interacts with XIAP/BIRC4 and TLE3. Interacts with DDIT3/CHOP. The CTNNB1 and TCF7L2/TCF4 complex interacts with PML (isoform PML-4). Identified in a complex with CTNNB1 and FERMT2. Interacts with SPIN1. Interacts with C11orf84/SPINDOC in a SPIN1-dependent manner. Interacts with DAZAP2; the interaction results in localization of DAZAP2 to the nucleus. Post-translationally, in vitro, phosphorylated by TNIK. In terms of processing, phosphorylated at Thr-201 and/or Thr-212 by NLK. Phosphorylation by NLK at these sites inhibits DNA-binding by TCF7L2/TCF4, thereby preventing transcriptional activation of target genes of the canonical Wnt/beta-catenin signaling pathway. Polysumoylated. Sumoylation is enhanced by PIAS family members and desumoylation is enhanced by SENP2. Sumoylation/desumoylation regulates TCF7L2/TCF4 transcription activity in the Wnt/beta-catenin signaling pathway without altering interaction with CTNNB1 nor binding to DNA. In terms of tissue distribution, detected in epithelium from small intestine, with the highest expression at the top of the crypts and a gradient of expression from crypt to villus. Detected in colon epithelium and colon cancer, and in epithelium from mammary gland and carcinomas derived therefrom.

It localises to the nucleus. The protein localises to the PML body. Functionally, participates in the Wnt signaling pathway and modulates MYC expression by binding to its promoter in a sequence-specific manner. Acts as a repressor in the absence of CTNNB1, and as activator in its presence. Activates transcription from promoters with several copies of the Tcf motif 5'-CCTTTGATC-3' in the presence of CTNNB1. TLE1, TLE2, TLE3 and TLE4 repress transactivation mediated by TCF7L2/TCF4 and CTNNB1. Expression of dominant-negative mutants results in cell-cycle arrest in G1. Necessary for the maintenance of the epithelial stem-cell compartment of the small intestine. In Homo sapiens (Human), this protein is Transcription factor 7-like 2 (TCF7L2).